A 173-amino-acid polypeptide reads, in one-letter code: Putative metal-dependent hydrolase BA_2700/GBAA_2700/BAS2515 (173 aa).

3 residues coordinate Zn(2+): histidine 65, histidine 156, and histidine 160.

The protein belongs to the metal hydrolase YfiT family. As to quaternary structure, homodimer. The cofactor is Zn(2+).

It localises to the cytoplasm. Functionally, possible metal-dependent hydrolase. This is Putative metal-dependent hydrolase BA_2700/GBAA_2700/BAS2515 from Bacillus anthracis.